A 407-amino-acid chain; its full sequence is Transmembrane protein 184B (407 aa).

A disordered region spans residues 1-25; sequence MTVRGDVLAPDPASPTTAAASPSVS. The segment covering 9 to 25 has biased composition (low complexity); it reads APDPASPTTAAASPSVS. Helical transmembrane passes span 40-60, 84-104, 121-141, 178-198, 214-234, 249-269, and 290-310; these read FLMT…ALLI, ILFI…FFTN, LVIY…SSIM, LQFC…QAFG, VTII…LFYF, FFMV…LAIL, and VAAG…ALAL. Positions 369–395 are disordered; the sequence is TLEPGPTWRGGAHGLSRSHSLSGARDN. 3 positions are modified to phosphoserine: S388, S402, and S403.

It belongs to the TMEM184 family.

It localises to the membrane. In terms of biological role, may activate the MAP kinase signaling pathway. This Homo sapiens (Human) protein is Transmembrane protein 184B (TMEM184B).